The primary structure comprises 238 residues: Doublecortin domain-containing protein (238 aa).

Residues 82–112 are partial p25alpha domain; the sequence is VFERLNDKQFYTGVQKTKFMELLKNNKNKSS. The 82-residue stretch at 151–232 folds into the Doublecortin domain; it reads KTIFLFNNEK…GDPPAPIRNL (82 aa).

In terms of assembly, interacts with alpha-tubulin 1 and beta-tubulin; the interaction stabilizes microtubule assembly.

Its subcellular location is the cytoplasm. The protein localises to the cytoskeleton. Its function is as follows. Involved in the stabilization of microtubules. Probably by controlling microtubules stabilization, plays a role in invasion, microneme secretion and parasite growth in host erythrocytes. This chain is Doublecortin domain-containing protein, found in Plasmodium falciparum (isolate 3D7).